Here is a 95-residue protein sequence, read N- to C-terminus: Co-chaperonin GroES (95 aa).

This sequence belongs to the GroES chaperonin family. In terms of assembly, heptamer of 7 subunits arranged in a ring. Interacts with the chaperonin GroEL.

The protein resides in the cytoplasm. In terms of biological role, together with the chaperonin GroEL, plays an essential role in assisting protein folding. The GroEL-GroES system forms a nano-cage that allows encapsulation of the non-native substrate proteins and provides a physical environment optimized to promote and accelerate protein folding. GroES binds to the apical surface of the GroEL ring, thereby capping the opening of the GroEL channel. This Staphylococcus saprophyticus subsp. saprophyticus (strain ATCC 15305 / DSM 20229 / NCIMB 8711 / NCTC 7292 / S-41) protein is Co-chaperonin GroES.